The primary structure comprises 183 residues: Interleukin-24 (183 aa).

Positions 1–28 are cleaved as a signal peptide; the sequence is MQTSLRQQILPGLSLILLVLNQVPELQG. Cysteines 36 and 83 form a disulfide. Asparagine 76 carries N-linked (GlcNAc...) asparagine glycosylation. Lysine 99 is covalently cross-linked (Glycyl lysine isopeptide (Lys-Gly) (interchain with G-Cter in ubiquitin)).

Belongs to the IL-10 family. In terms of processing, glycosylated. Post-translationally, ubiquitination at Lys-99 promotes proteasomal degradation.

It is found in the secreted. Multifunctional cytokine mainly produced by T-cells that plays a regulatory role in immune response, tissue homeostasis, host defense, and oncogenesis. Possesses antiviral functions and induces the type I interferon response during influenza infection. Signals through two receptor complexes IL20RA/IL20RB or IL20RB/IL22RA1. In turn, stimulates the JAK1-STAT3 and MAPK pathways and promotes the secretion of pro-inflammatory mediators including IL8 and MMP1. Intracellularly, maintains endoplasmic reticulum homeostasis by restricting the eIF2alpha-CHOP pathway-mediated stress signal. In addition, acts as a quality control mechanism for the ubiquitin proteasome system by alerting the cell to proteasome dysfunction through activation of PKR/EIF2AK2. The sequence is that of Interleukin-24 (Il24) from Rattus norvegicus (Rat).